The chain runs to 378 residues: Beta-1,3-galactosyltransferase 4 (378 aa).

The Cytoplasmic portion of the chain corresponds to 1–8 (MQLRLFRR). A helical; Signal-anchor for type II membrane protein membrane pass occupies residues 9–19 (LLLAALLLVIV). The Lumenal segment spans residues 20-378 (WTLFGPSGLG…RCRAIAWLQS (359 aa)). N-linked (GlcNAc...) asparagine glycosylation occurs at N149.

The protein belongs to the glycosyltransferase 31 family. Highly expressed in heart, skeletal muscle and pancreas and, to a lesser extent, in brain, placenta, kidney, liver and lung.

The protein resides in the golgi apparatus membrane. The catalysed reaction is a ganglioside GM2 (d18:1(4E)) + UDP-alpha-D-galactose = a ganglioside GM1 (d18:1(4E)) + UDP + H(+). It carries out the reaction a ganglioside GM2 + UDP-alpha-D-galactose = a ganglioside GM1 + UDP + H(+). It catalyses the reaction a ganglioside GD2 (d18:1(4E)) + UDP-alpha-D-galactose = a ganglioside GD1b (d18:1(4E)) + UDP + H(+). The enzyme catalyses a ganglioside GA2 (d18:1(4E)) + UDP-alpha-D-galactose = a ganglioside GA1 (d18:1(4E)) + UDP + H(+). It functions in the pathway protein modification; protein glycosylation. In terms of biological role, involved in GM1/GD1B/GA1 ganglioside biosynthesis. This is Beta-1,3-galactosyltransferase 4 from Homo sapiens (Human).